A 530-amino-acid polypeptide reads, in one-letter code: MSQLDTTTPSGDYLMALDAGTGSVRAVIFDLNGNQIAAGQAEWLHLPVPDVPGSMEFDLTTNWQLTCQCIRQALHLAKLPASAIRAVAACSMREGIVLYDRSGTPIWACANVDARASREVSELKELHNNGFELEIYQCSGQTLALSAMPRLLWLAHYRPDIYRQAGTLTMISDWLANMLSGELAVDPSNAGTTGMLDLVTRNWQPNLLEMAGLRADILSPVKETGTLLGHVTAKAAQECGLLAGTPVVMGGGDVQLGCLGLGVVHAGQTAVLGGTFWQQVVNLPQPIIDPNMNTRINPHVIPGMVQAESISFFTGLTMRWFRDAFCAEEKLLAQRLGIDTYSLLEDMAARVPAGAYGVMPIFSDVMQFKSWYHAAPSFINLSLDPEKCNKATLFRALEENAAIVSACNLAQIAEFSGVKASSVVFAGGGAKGKLWSQILADVTGVPVKVPVVKEATALGCAIAAGVGVGLYEALDKTGERLVRWEREYIPNTEHKALYQAAKTNWQAVYTDQLGLVDCGLTTSLWKAPGL.

This sequence belongs to the FGGY kinase family.

It is found in the cytoplasm. It carries out the reaction (S)-4,5-dihydroxypentane-2,3-dione + ATP = (2S)-2-hydroxy-3,4-dioxopentyl phosphate + ADP + H(+). Catalyzes the phosphorylation of autoinducer-2 (AI-2) to phospho-AI-2, which subsequently inactivates the transcriptional regulator LsrR and leads to the transcription of the lsr operon. Phosphorylates the ring-open form of (S)-4,5-dihydroxypentane-2,3-dione (DPD), which is the precursor to all AI-2 signaling molecules, at the C5 position. The chain is Autoinducer-2 kinase from Yersinia pestis bv. Antiqua (strain Angola).